We begin with the raw amino-acid sequence, 85 residues long: Kappa-theraphotoxin-Gr1a (85 aa).

The first 21 residues, 1-21 (MKTSVFAAILGLALFAVLCSG), serve as a signal peptide directing secretion. The propeptide occupies 22–49 (SELQEKDLKETLLSAIMETALEAQPEER). 3 disulfides stabilise this stretch: cysteine 51/cysteine 65, cysteine 58/cysteine 70, and cysteine 64/cysteine 77. The segment at 53–55 (YLF) is involved in active face.

It belongs to the neurotoxin 10 (Hwtx-1) family. 09 (HaTx) subfamily. Expressed by the venom gland.

It localises to the secreted. In terms of biological role, inhibits Kv2.1/KCNB1 and Kv4.2/KCND2 voltage-gated potassium channels. Acts as a gating modifier by shifting channel openings to more depolarized voltages and acts via the occupancy of multiple binding sites on the channel. The toxin binding sites are situated on the S3-S4 extracellular linker of the channel. At least two hanatoxin molecules can occupy the Kv2.1/KCNB1 channel, and maybe more (three or four). Can also inhibit calcium channels (Cav2.1/CACNA1A). Needs to partition into the membrane in order to bind to the channel. The protein is Kappa-theraphotoxin-Gr1a of Grammostola rosea (Chilean rose tarantula).